The sequence spans 341 residues: Hyaluronidase A (341 aa).

Residues N3, N68, and N83 are each glycosylated (N-linked (GlcNAc...) asparagine). 2 disulfide bridges follow: C23-C311 and C189-C201.

This sequence belongs to the glycosyl hydrolase 56 family. Expressed by the venom gland.

The protein resides in the secreted. The enzyme catalyses Random hydrolysis of (1-&gt;4)-linkages between N-acetyl-beta-D-glucosamine and D-glucuronate residues in hyaluronate.. In terms of biological role, may hydrolyze high molecular weight hyaluronic acid to produce small oligosaccharides. The chain is Hyaluronidase A from Vespa velutina (Asian yellow-legged hornet).